Consider the following 469-residue polypeptide: Deoxyribodipyrimidine photo-lyase (469 aa).

The Photolyase/cryptochrome alpha/beta domain occupies 1 to 133 (MRLVWFRRDL…IWSAFDDKCV (133 aa)). Glu107 serves as a coordination point for (6R)-5,10-methylene-5,6,7,8-tetrahydrofolate.

This sequence belongs to the DNA photolyase class-1 family. Monomer. FAD serves as cofactor. (6R)-5,10-methylene-5,6,7,8-tetrahydrofolate is required as a cofactor.

The catalysed reaction is cyclobutadipyrimidine (in DNA) = 2 pyrimidine residues (in DNA).. In terms of biological role, involved in repair of UV radiation-induced DNA damage. Catalyzes the light-dependent monomerization (300-600 nm) of cyclobutyl pyrimidine dimers (in cis-syn configuration), which are formed between adjacent bases on the same DNA strand upon exposure to ultraviolet radiation. This is Deoxyribodipyrimidine photo-lyase (phrA) from Vibrio cholerae serotype O1 (strain ATCC 39315 / El Tor Inaba N16961).